The chain runs to 101 residues: Putative pterin-4-alpha-carbinolamine dehydratase (101 aa).

This sequence belongs to the pterin-4-alpha-carbinolamine dehydratase family.

The enzyme catalyses (4aS,6R)-4a-hydroxy-L-erythro-5,6,7,8-tetrahydrobiopterin = (6R)-L-erythro-6,7-dihydrobiopterin + H2O. In Rhodopseudomonas palustris (strain BisB18), this protein is Putative pterin-4-alpha-carbinolamine dehydratase.